We begin with the raw amino-acid sequence, 269 residues long: Tryptophan synthase alpha chain (269 aa).

Residues Glu-56 and Asp-67 each act as proton acceptor in the active site.

It belongs to the TrpA family. Tetramer of two alpha and two beta chains.

It catalyses the reaction (1S,2R)-1-C-(indol-3-yl)glycerol 3-phosphate + L-serine = D-glyceraldehyde 3-phosphate + L-tryptophan + H2O. It functions in the pathway amino-acid biosynthesis; L-tryptophan biosynthesis; L-tryptophan from chorismate: step 5/5. Functionally, the alpha subunit is responsible for the aldol cleavage of indoleglycerol phosphate to indole and glyceraldehyde 3-phosphate. The protein is Tryptophan synthase alpha chain of Mycobacterium ulcerans (strain Agy99).